The following is a 216-amino-acid chain: Protein Syd (216 aa).

The protein belongs to the Syd family.

The protein resides in the cell inner membrane. In terms of biological role, interacts with the SecY protein in vivo. May bind preferentially to an uncomplexed state of SecY, thus functioning either as a chelating agent for excess SecY in the cell or as a regulatory factor that negatively controls the translocase function. The polypeptide is Protein Syd (Shewanella baltica (strain OS195)).